The sequence spans 141 residues: HTH-type transcriptional regulator MntR (141 aa).

An HTH dtxR-type domain is found at 1-63; the sequence is MPTPSMEDYI…YEKYRGLVLT (63 aa). The Mn(2+) site is built by D8, E11, H77, E99, E102, and H103.

The protein belongs to the DtxR/MntR family. As to quaternary structure, homodimer.

Its subcellular location is the cytoplasm. With respect to regulation, DNA binding is strongly activated by Mn(2+). Central regulator of manganese homeostasis. The protein is HTH-type transcriptional regulator MntR of Geobacillus kaustophilus (strain HTA426).